The sequence spans 472 residues: tRNA-2-methylthio-N(6)-dimethylallyladenosine synthase (472 aa).

The MTTase N-terminal domain occupies 22-138; the sequence is RSYWITTFGC…LETLLQQVDS (117 aa). [4Fe-4S] cluster is bound by residues Cys-31, Cys-67, Cys-101, Cys-173, Cys-177, and Cys-180. One can recognise a Radical SAM core domain in the interval 159–396; sequence RDSAICGWVN…NALVERNARE (238 aa). The 69-residue stretch at 399–467 folds into the TRAM domain; sequence IRYQGRTEEV…SFSLSGTPLP (69 aa).

Belongs to the methylthiotransferase family. MiaB subfamily. Monomer. The cofactor is [4Fe-4S] cluster.

Its subcellular location is the cytoplasm. The enzyme catalyses N(6)-dimethylallyladenosine(37) in tRNA + (sulfur carrier)-SH + AH2 + 2 S-adenosyl-L-methionine = 2-methylsulfanyl-N(6)-dimethylallyladenosine(37) in tRNA + (sulfur carrier)-H + 5'-deoxyadenosine + L-methionine + A + S-adenosyl-L-homocysteine + 2 H(+). Catalyzes the methylthiolation of N6-(dimethylallyl)adenosine (i(6)A), leading to the formation of 2-methylthio-N6-(dimethylallyl)adenosine (ms(2)i(6)A) at position 37 in tRNAs that read codons beginning with uridine. In Synechococcus sp. (strain CC9902), this protein is tRNA-2-methylthio-N(6)-dimethylallyladenosine synthase.